The following is a 628-amino-acid chain: ATP-binding cassette sub-family F member 2 (628 aa).

The segment at 1-57 (MPSDLAKKKAAKKKEAAKARQRPRKGHEENGDAVTEPQVAEEKIEEANGRETTGDGE) is disordered. The segment covering 40 to 53 (AEEKIEEANGRETT) has biased composition (basic and acidic residues). ABC transporter domains are found at residues 91-330 (VHII…ENQM) and 401-618 (IMVQ…VDEE). 123–130 (GLNGIGKS) contributes to the ATP binding site. Residue threonine 223 is modified to Phosphothreonine. Residue lysine 309 is modified to N6-acetyllysine. 435–442 (GPNGAGKS) contributes to the ATP binding site. Residue serine 517 is modified to Phosphoserine.

It belongs to the ABC transporter superfamily. ABCF family. EF3 subfamily.

This Mus musculus (Mouse) protein is ATP-binding cassette sub-family F member 2.